A 130-amino-acid polypeptide reads, in one-letter code: Aspartate 1-decarboxylase (130 aa).

The active-site Schiff-base intermediate with substrate; via pyruvic acid is the Ser-25. Ser-25 bears the Pyruvic acid (Ser) mark. Thr-57 lines the substrate pocket. The active-site Proton donor is the Tyr-58. Position 73 to 75 (73 to 75 (GAT)) interacts with substrate.

The protein belongs to the PanD family. As to quaternary structure, heterooctamer of four alpha and four beta subunits. Pyruvate is required as a cofactor. In terms of processing, is synthesized initially as an inactive proenzyme, which is activated by self-cleavage at a specific serine bond to produce a beta-subunit with a hydroxyl group at its C-terminus and an alpha-subunit with a pyruvoyl group at its N-terminus.

It is found in the cytoplasm. The catalysed reaction is L-aspartate + H(+) = beta-alanine + CO2. The protein operates within cofactor biosynthesis; (R)-pantothenate biosynthesis; beta-alanine from L-aspartate: step 1/1. Catalyzes the pyruvoyl-dependent decarboxylation of aspartate to produce beta-alanine. The polypeptide is Aspartate 1-decarboxylase (Lactiplantibacillus plantarum (strain ATCC BAA-793 / NCIMB 8826 / WCFS1) (Lactobacillus plantarum)).